Consider the following 316-residue polypeptide: 4-hydroxy-3-methylbut-2-enyl diphosphate reductase (316 aa).

A [4Fe-4S] cluster-binding site is contributed by C18. (2E)-4-hydroxy-3-methylbut-2-enyl diphosphate is bound by residues H47 and H80. Positions 47 and 80 each coordinate dimethylallyl diphosphate. 2 residues coordinate isopentenyl diphosphate: H47 and H80. C102 contributes to the [4Fe-4S] cluster binding site. H130 is a (2E)-4-hydroxy-3-methylbut-2-enyl diphosphate binding site. H130 provides a ligand contact to dimethylallyl diphosphate. Residue H130 participates in isopentenyl diphosphate binding. E132 (proton donor) is an active-site residue. T171 lines the (2E)-4-hydroxy-3-methylbut-2-enyl diphosphate pocket. C201 is a [4Fe-4S] cluster binding site. (2E)-4-hydroxy-3-methylbut-2-enyl diphosphate-binding residues include S229, S230, N231, and S274. Dimethylallyl diphosphate is bound by residues S229, S230, N231, and S274. Isopentenyl diphosphate-binding residues include S229, S230, N231, and S274.

This sequence belongs to the IspH family. Requires [4Fe-4S] cluster as cofactor.

It carries out the reaction isopentenyl diphosphate + 2 oxidized [2Fe-2S]-[ferredoxin] + H2O = (2E)-4-hydroxy-3-methylbut-2-enyl diphosphate + 2 reduced [2Fe-2S]-[ferredoxin] + 2 H(+). The catalysed reaction is dimethylallyl diphosphate + 2 oxidized [2Fe-2S]-[ferredoxin] + H2O = (2E)-4-hydroxy-3-methylbut-2-enyl diphosphate + 2 reduced [2Fe-2S]-[ferredoxin] + 2 H(+). It participates in isoprenoid biosynthesis; dimethylallyl diphosphate biosynthesis; dimethylallyl diphosphate from (2E)-4-hydroxy-3-methylbutenyl diphosphate: step 1/1. The protein operates within isoprenoid biosynthesis; isopentenyl diphosphate biosynthesis via DXP pathway; isopentenyl diphosphate from 1-deoxy-D-xylulose 5-phosphate: step 6/6. Functionally, catalyzes the conversion of 1-hydroxy-2-methyl-2-(E)-butenyl 4-diphosphate (HMBPP) into a mixture of isopentenyl diphosphate (IPP) and dimethylallyl diphosphate (DMAPP). Acts in the terminal step of the DOXP/MEP pathway for isoprenoid precursor biosynthesis. In Paracoccus denitrificans (strain Pd 1222), this protein is 4-hydroxy-3-methylbut-2-enyl diphosphate reductase.